The sequence spans 145 residues: Transmembrane protein 170A (145 aa).

The Lumenal segment spans residues 1 to 50 (MIEALIVGEMQDVQIGFVKQILSLNLVPRSNNTTCGNNTSLCDFSEMWYG). Residues Asn31 and Asn37 are each glycosylated (N-linked (GlcNAc...) asparagine). The chain crosses the membrane as a helical span at residues 51–71 (VFLWAVVSSLIFHLPAALLAL). Topologically, residues 72–81 (ATLRRHKVAR) are cytoplasmic. The helical transmembrane segment at 82–102 (FFPLGILLMGIIGPLFGGVLT) threads the bilayer. Topologically, residues 103 to 117 (SAAIAGVYKAAGKSM) are lumenal. A helical membrane pass occupies residues 118-138 (FSLEALVFGVGQSLFIFIISF). The Cytoplasmic portion of the chain corresponds to 139-145 (LRILATL).

The protein belongs to the TMEM170 family.

The protein resides in the endoplasmic reticulum membrane. Its subcellular location is the nucleus envelope. Functionally, may regulate membrane morphogenesis in the endoplasmic reticulum (ER) by promoting ER sheet formation at the expense of ER tubules. This chain is Transmembrane protein 170A (tmem170a), found in Danio rerio (Zebrafish).